The primary structure comprises 143 residues: Small ribosomal subunit protein uS11c (143 aa).

It belongs to the universal ribosomal protein uS11 family. Part of the 30S ribosomal subunit.

It is found in the plastid. The protein resides in the chloroplast. This Hordeum vulgare (Barley) protein is Small ribosomal subunit protein uS11c.